Here is a 382-residue protein sequence, read N- to C-terminus: S-adenosylmethionine synthase (382 aa).

Residue His16 participates in ATP binding. Asp18 contributes to the Mg(2+) binding site. Position 44 (Glu44) interacts with K(+). Residues Glu57 and Gln100 each coordinate L-methionine. The interval 100–110 (QSPDIAQGVDN) is flexible loop. Residues 165-167 (DAK), 231-232 (RF), Asp240, 246-247 (RK), and Lys267 each bind ATP. Asp240 is an L-methionine binding site. Residue Lys271 participates in L-methionine binding.

The protein belongs to the AdoMet synthase family. Homotetramer; dimer of dimers. Mg(2+) serves as cofactor. Requires K(+) as cofactor.

It is found in the cytoplasm. It catalyses the reaction L-methionine + ATP + H2O = S-adenosyl-L-methionine + phosphate + diphosphate. It participates in amino-acid biosynthesis; S-adenosyl-L-methionine biosynthesis; S-adenosyl-L-methionine from L-methionine: step 1/1. In terms of biological role, catalyzes the formation of S-adenosylmethionine (AdoMet) from methionine and ATP. The overall synthetic reaction is composed of two sequential steps, AdoMet formation and the subsequent tripolyphosphate hydrolysis which occurs prior to release of AdoMet from the enzyme. This is S-adenosylmethionine synthase from Legionella pneumophila (strain Paris).